We begin with the raw amino-acid sequence, 165 residues long: Phosphopantetheine adenylyltransferase (165 aa).

A substrate-binding site is contributed by S10. ATP-binding positions include 10-11 and H18; that span reads SF. Substrate is bound by residues K42, L74, and R88. ATP-binding positions include 89 to 91, E99, and 124 to 130; these read GLR and YSFLSSS.

This sequence belongs to the bacterial CoaD family. As to quaternary structure, homohexamer. Mg(2+) serves as cofactor.

The protein resides in the cytoplasm. It catalyses the reaction (R)-4'-phosphopantetheine + ATP + H(+) = 3'-dephospho-CoA + diphosphate. It functions in the pathway cofactor biosynthesis; coenzyme A biosynthesis; CoA from (R)-pantothenate: step 4/5. Reversibly transfers an adenylyl group from ATP to 4'-phosphopantetheine, yielding dephospho-CoA (dPCoA) and pyrophosphate. The chain is Phosphopantetheine adenylyltransferase from Anoxybacillus flavithermus (strain DSM 21510 / WK1).